Consider the following 52-residue polypeptide: Large ribosomal subunit protein bL33 (52 aa).

Belongs to the bacterial ribosomal protein bL33 family.

This Chlamydia muridarum (strain MoPn / Nigg) protein is Large ribosomal subunit protein bL33 (rpmG).